We begin with the raw amino-acid sequence, 264 residues long: Ribosomal RNA small subunit methyltransferase A (264 aa).

6 residues coordinate S-adenosyl-L-methionine: Asn12, Leu14, Gly40, Glu61, Asp86, and Asn105.

Belongs to the class I-like SAM-binding methyltransferase superfamily. rRNA adenine N(6)-methyltransferase family. RsmA subfamily.

It localises to the cytoplasm. The catalysed reaction is adenosine(1518)/adenosine(1519) in 16S rRNA + 4 S-adenosyl-L-methionine = N(6)-dimethyladenosine(1518)/N(6)-dimethyladenosine(1519) in 16S rRNA + 4 S-adenosyl-L-homocysteine + 4 H(+). Functionally, specifically dimethylates two adjacent adenosines (A1518 and A1519) in the loop of a conserved hairpin near the 3'-end of 16S rRNA in the 30S particle. May play a critical role in biogenesis of 30S subunits. This Fusobacterium nucleatum subsp. nucleatum (strain ATCC 25586 / DSM 15643 / BCRC 10681 / CIP 101130 / JCM 8532 / KCTC 2640 / LMG 13131 / VPI 4355) protein is Ribosomal RNA small subunit methyltransferase A.